Consider the following 317-residue polypeptide: Pantothenate kinase (317 aa).

Residue Gly99–Ser106 participates in ATP binding.

It belongs to the prokaryotic pantothenate kinase family.

It is found in the cytoplasm. The enzyme catalyses (R)-pantothenate + ATP = (R)-4'-phosphopantothenate + ADP + H(+). Its pathway is cofactor biosynthesis; coenzyme A biosynthesis; CoA from (R)-pantothenate: step 1/5. This chain is Pantothenate kinase, found in Mannheimia succiniciproducens (strain KCTC 0769BP / MBEL55E).